A 33-amino-acid polypeptide reads, in one-letter code: Fatty acid-binding protein, intestinal (33 aa).

Belongs to the calycin superfamily. Fatty-acid binding protein (FABP) family. In terms of tissue distribution, intestine.

It is found in the cytoplasm. Its function is as follows. FABPs are thought to play a role in the intracellular transport of long-chain fatty acids and their acyl-CoA esters. This is Fatty acid-binding protein, intestinal (fabp2) from Rhamdia sapo (South American catfish).